The following is a 423-amino-acid chain: Serine--tRNA ligase (423 aa).

L-serine is bound at residue 231–233; sequence TAE. 262-264 provides a ligand contact to ATP; that stretch reads RSE. Glu-285 serves as a coordination point for L-serine. 349–352 contacts ATP; the sequence is EISS. Ser-384 contacts L-serine.

This sequence belongs to the class-II aminoacyl-tRNA synthetase family. Type-1 seryl-tRNA synthetase subfamily. As to quaternary structure, homodimer. The tRNA molecule binds across the dimer.

Its subcellular location is the cytoplasm. It carries out the reaction tRNA(Ser) + L-serine + ATP = L-seryl-tRNA(Ser) + AMP + diphosphate + H(+). The enzyme catalyses tRNA(Sec) + L-serine + ATP = L-seryl-tRNA(Sec) + AMP + diphosphate + H(+). It participates in aminoacyl-tRNA biosynthesis; selenocysteinyl-tRNA(Sec) biosynthesis; L-seryl-tRNA(Sec) from L-serine and tRNA(Sec): step 1/1. Its function is as follows. Catalyzes the attachment of serine to tRNA(Ser). Is also able to aminoacylate tRNA(Sec) with serine, to form the misacylated tRNA L-seryl-tRNA(Sec), which will be further converted into selenocysteinyl-tRNA(Sec). The chain is Serine--tRNA ligase from Lactococcus lactis subsp. lactis (strain IL1403) (Streptococcus lactis).